The primary structure comprises 424 residues: MPHTLAEKLLISHSEVDDASPGDIIMVRCDLVMANDVSGPVAFRQMERMGVQRVFDPSKVVMVSDHFMPAKDARSAALQKRLKSWSDLQGVYYYGQGRGGIEHTVLVEDGWIVPGMVIAGGDSHTCTYGALGAFGTGLGSTDIAACLAFGEFWQQVPGTIQVEFTGHKGSFVAGKDLILAVIADIGVGGGANAVLEFVGEGAASLSLDDRLAVANMAVEAGAETGIFPADEVTARYLDRRADREWHPERSDPDASYVRKVKIDLNSLEPLVALPHSPGNVVAVSEARGTKIDQVYIGNCSNGTITDLRQTAEILRGNRVHPDVRAIIVPASQKVYRQAISEGLIDVFVEAGAVVSTPTCGACFGGHMGVLAEGERAITTTNRNFKGRMGSPLAEVCLANAYVAAAAAVAGEIVEPASICSEPVR.

C299, C359, and C362 together coordinate [4Fe-4S] cluster.

Belongs to the aconitase/IPM isomerase family. LeuC type 2 subfamily. Heterodimer of LeuC and LeuD. The cofactor is [4Fe-4S] cluster.

The catalysed reaction is (2R,3S)-3-isopropylmalate = (2S)-2-isopropylmalate. It participates in amino-acid biosynthesis; L-leucine biosynthesis; L-leucine from 3-methyl-2-oxobutanoate: step 2/4. In terms of biological role, catalyzes the isomerization between 2-isopropylmalate and 3-isopropylmalate, via the formation of 2-isopropylmaleate. The protein is 3-isopropylmalate dehydratase large subunit 2 of Rubrobacter xylanophilus (strain DSM 9941 / JCM 11954 / NBRC 16129 / PRD-1).